Consider the following 528-residue polypeptide: Na(+)/H(+) antiporter NhaB (528 aa).

11 helical membrane-spanning segments follow: residues Leu29–Ile49, Ile52–Ile72, Val95–Phe115, Ala139–Val159, Leu203–Pro223, Val248–Gly268, Ala304–Ile324, Glu349–Ile369, Leu390–Gly410, Ala448–Ile468, and Val476–Leu496.

This sequence belongs to the NhaB Na(+)/H(+) (TC 2.A.34) antiporter family.

Its subcellular location is the cell inner membrane. It catalyses the reaction 2 Na(+)(in) + 3 H(+)(out) = 2 Na(+)(out) + 3 H(+)(in). Its function is as follows. Na(+)/H(+) antiporter that extrudes sodium in exchange for external protons. The chain is Na(+)/H(+) antiporter NhaB from Shewanella woodyi (strain ATCC 51908 / MS32).